The primary structure comprises 729 residues: 1,4-alpha-glucan branching enzyme GlgB (729 aa).

The Nucleophile role is filled by Asp-405. The Proton donor role is filled by Glu-458.

Belongs to the glycosyl hydrolase 13 family. GlgB subfamily. As to quaternary structure, monomer.

The catalysed reaction is Transfers a segment of a (1-&gt;4)-alpha-D-glucan chain to a primary hydroxy group in a similar glucan chain.. It functions in the pathway glycan biosynthesis; glycogen biosynthesis. Its function is as follows. Catalyzes the formation of the alpha-1,6-glucosidic linkages in glycogen by scission of a 1,4-alpha-linked oligosaccharide from growing alpha-1,4-glucan chains and the subsequent attachment of the oligosaccharide to the alpha-1,6 position. In Mannheimia succiniciproducens (strain KCTC 0769BP / MBEL55E), this protein is 1,4-alpha-glucan branching enzyme GlgB.